We begin with the raw amino-acid sequence, 595 residues long: DNA primase (595 aa).

The CHC2-type zinc-finger motif lies at 38–62 (CPFHDEKTPSFIVYPTRGHYHCYGC). A Toprim domain is found at 251 to 331 (RRVILVEGQA…GITAIVCRLP (81 aa)). Mg(2+)-binding residues include Glu-257, Asp-302, and Asp-304. The segment covering 430–441 (KGKKVSAKEPSS) has biased composition (basic and acidic residues). Positions 430–451 (KGKKVSAKEPSSESKQTSTEGK) are disordered.

This sequence belongs to the DnaG primase family. In terms of assembly, monomer. Interacts with DnaB. Requires Zn(2+) as cofactor. It depends on Mg(2+) as a cofactor.

It catalyses the reaction ssDNA + n NTP = ssDNA/pppN(pN)n-1 hybrid + (n-1) diphosphate.. In terms of biological role, RNA polymerase that catalyzes the synthesis of short RNA molecules used as primers for DNA polymerase during DNA replication. In Chlamydia trachomatis serovar D (strain ATCC VR-885 / DSM 19411 / UW-3/Cx), this protein is DNA primase.